We begin with the raw amino-acid sequence, 236 residues long: Small ribosomal subunit protein uS2c (236 aa).

This sequence belongs to the universal ribosomal protein uS2 family.

The protein resides in the plastid. Its subcellular location is the chloroplast. This is Small ribosomal subunit protein uS2c (rps2) from Nandina domestica (Heavenly bamboo).